A 227-amino-acid polypeptide reads, in one-letter code: Enolase-phosphatase E1 (227 aa).

It belongs to the HAD-like hydrolase superfamily. MasA/MtnC family. Monomer. Mg(2+) serves as cofactor.

It carries out the reaction 5-methylsulfanyl-2,3-dioxopentyl phosphate + H2O = 1,2-dihydroxy-5-(methylsulfanyl)pent-1-en-3-one + phosphate. It functions in the pathway amino-acid biosynthesis; L-methionine biosynthesis via salvage pathway; L-methionine from S-methyl-5-thio-alpha-D-ribose 1-phosphate: step 3/6. The protein operates within amino-acid biosynthesis; L-methionine biosynthesis via salvage pathway; L-methionine from S-methyl-5-thio-alpha-D-ribose 1-phosphate: step 4/6. In terms of biological role, bifunctional enzyme that catalyzes the enolization of 2,3-diketo-5-methylthiopentyl-1-phosphate (DK-MTP-1-P) into the intermediate 2-hydroxy-3-keto-5-methylthiopentenyl-1-phosphate (HK-MTPenyl-1-P), which is then dephosphorylated to form the acireductone 1,2-dihydroxy-3-keto-5-methylthiopentene (DHK-MTPene). The sequence is that of Enolase-phosphatase E1 from Azotobacter vinelandii (strain DJ / ATCC BAA-1303).